A 440-amino-acid chain; its full sequence is Thymidine phosphorylase (440 aa).

It belongs to the thymidine/pyrimidine-nucleoside phosphorylase family. Homodimer.

It carries out the reaction thymidine + phosphate = 2-deoxy-alpha-D-ribose 1-phosphate + thymine. Its pathway is pyrimidine metabolism; dTMP biosynthesis via salvage pathway; dTMP from thymine: step 1/2. Its function is as follows. The enzymes which catalyze the reversible phosphorolysis of pyrimidine nucleosides are involved in the degradation of these compounds and in their utilization as carbon and energy sources, or in the rescue of pyrimidine bases for nucleotide synthesis. The sequence is that of Thymidine phosphorylase from Cronobacter sakazakii (strain ATCC BAA-894) (Enterobacter sakazakii).